We begin with the raw amino-acid sequence, 128 residues long: LIM domain-containing protein 2 (128 aa).

M1 carries the post-translational modification N-acetylmethionine. Positions 1-25 are disordered; it reads MFQAAGAAQATPSHEAKGGGSSSTV. In terms of domain architecture, LIM zinc-binding spans 39-99; sequence ETCAACQKTV…KPHFQQLFKS (61 aa). Zn(2+) contacts are provided by C41, C44, H62, C65, C68, C71, C89, and H92.

In terms of assembly, interacts with ILK.

The protein resides in the cytoplasm. It is found in the nucleus. Acts as an activator of the protein-kinase ILK, thereby regulating cell motility. In Bos taurus (Bovine), this protein is LIM domain-containing protein 2 (LIMD2).